The primary structure comprises 215 residues: Porin MspC (215 aa).

The N-terminal stretch at 1–31 is a signal peptide; that stretch reads MKAISRVLIAMISALAAAVAGLFVSAGTSHA.

Belongs to the mycobacterial porin (TC 1.B.24) family. Octamers. Probably forms a goblet with the wide end on the exterior of the outer membrane and a central channel. It is not known if mixed oligomers of MspC with other Msp subunits form in vivo.

It is found in the cell outer membrane. Its subcellular location is the secreted. It localises to the cell wall. A constitutively expressed secondary porin, forms a water-filled channel which favors the permeation of cations and less efficiently phosphate. There are about 2400 porins in wild-type, 800 in an mspA deletion and 150 in a double mspA-mspC deletion. In Mycolicibacterium smegmatis (strain ATCC 700084 / mc(2)155) (Mycobacterium smegmatis), this protein is Porin MspC (mspC).